The primary structure comprises 394 residues: HORMA domain-containing protein 1 (394 aa).

Positions 24–226 constitute an HORMA domain; it reads HQSLVLVKRL…TPFHIFKVKV (203 aa). The segment covering 253 to 282 has biased composition (basic and acidic residues); sequence ILRDKDVEDEQEHYTSDDLDIETKMEEQEK. Residues 253 to 394 are disordered; sequence ILRDKDVEDE…RKFSEPKEHI (142 aa). Residues 288–300 show a composition bias toward acidic residues; the sequence is ELEEPSLVCEEDE. Polar residues-rich tracts occupy residues 310-324 and 343-352; these read LSIS…VNKT and KMANGNQPVK. Basic and acidic residues predominate over residues 362–374; sequence QHESGRIVLHHFD. Serine 376 is subject to Phosphoserine. Residues 383–386 carry the Nuclear localization signal motif; that stretch reads KRRK.

In terms of assembly, interacts with HORMAD2. Interacts with IHO1. Phosphorylated at Ser-377 in a SPO11-dependent manner. As to expression, testis-specific. Over-expressed in carcinomas.

The protein resides in the nucleus. It localises to the chromosome. Its function is as follows. Plays a key role in meiotic progression. Regulates 3 different functions during meiosis: ensures that sufficient numbers of processed DNA double-strand breaks (DSBs) are available for successful homology search by increasing the steady-state numbers of single-stranded DSB ends. Promotes synaptonemal-complex formation independently of its role in homology search. Plays a key role in the male mid-pachytene checkpoint and the female meiotic prophase checkpoint: required for efficient build-up of ATR activity on unsynapsed chromosome regions, a process believed to form the basis of meiotic silencing of unsynapsed chromatin (MSUC) and meiotic prophase quality control in both sexes. This chain is HORMA domain-containing protein 1, found in Homo sapiens (Human).